The primary structure comprises 345 residues: Phosphoribosylformylglycinamidine cyclo-ligase (345 aa).

Belongs to the AIR synthase family.

It is found in the cytoplasm. The catalysed reaction is 2-formamido-N(1)-(5-O-phospho-beta-D-ribosyl)acetamidine + ATP = 5-amino-1-(5-phospho-beta-D-ribosyl)imidazole + ADP + phosphate + H(+). Its pathway is purine metabolism; IMP biosynthesis via de novo pathway; 5-amino-1-(5-phospho-D-ribosyl)imidazole from N(2)-formyl-N(1)-(5-phospho-D-ribosyl)glycinamide: step 2/2. The sequence is that of Phosphoribosylformylglycinamidine cyclo-ligase from Shouchella clausii (strain KSM-K16) (Alkalihalobacillus clausii).